The primary structure comprises 231 residues: Large ribosomal subunit protein uL1 (231 aa).

Belongs to the universal ribosomal protein uL1 family. In terms of assembly, part of the 50S ribosomal subunit.

Functionally, binds directly to 23S rRNA. The L1 stalk is quite mobile in the ribosome, and is involved in E site tRNA release. Its function is as follows. Protein L1 is also a translational repressor protein, it controls the translation of the L11 operon by binding to its mRNA. The polypeptide is Large ribosomal subunit protein uL1 (Pseudomonas fluorescens (strain ATCC BAA-477 / NRRL B-23932 / Pf-5)).